Consider the following 105-residue polypeptide: MAKWNGQYISPYAEQGKKSEQVKKITVCIPTKVLKILTDERTRRQINNLRHATNSELLCEAFLHAFTGQPLPNDDDLRKERNDEIPQAARILMRDLGINPDTWEY.

It belongs to the MetJ family. As to quaternary structure, homodimer.

It is found in the cytoplasm. Its function is as follows. This regulatory protein, when combined with SAM (S-adenosylmethionine) represses the expression of the methionine regulon and of enzymes involved in SAM synthesis. The sequence is that of Met repressor from Hamiltonella defensa subsp. Acyrthosiphon pisum (strain 5AT).